The sequence spans 138 residues: Acidic phospholipase A2 BITP01A (138 aa).

An N-terminal signal peptide occupies residues 1-16 (MRTLWIMAVLLVGVEG). Cystine bridges form between cysteine 42/cysteine 131, cysteine 44/cysteine 60, cysteine 59/cysteine 111, cysteine 65/cysteine 138, cysteine 66/cysteine 104, cysteine 73/cysteine 97, and cysteine 91/cysteine 102. 3 residues coordinate Ca(2+): tyrosine 43, glycine 45, and glycine 47. Histidine 63 is an active-site residue. Residue aspartate 64 coordinates Ca(2+). The active site involves aspartate 105.

Ca(2+) serves as cofactor. In terms of tissue distribution, expressed by the venom gland.

It localises to the secreted. The enzyme catalyses a 1,2-diacyl-sn-glycero-3-phosphocholine + H2O = a 1-acyl-sn-glycero-3-phosphocholine + a fatty acid + H(+). In terms of biological role, snake venom phospholipase A2 (PLA2) that induces edema in mice, produces neuromuscular blockade in chick biventer cervicis, increases CK release and produces myonecrosis. PLA2 catalyzes the calcium-dependent hydrolysis of the 2-acyl groups in 3-sn-phosphoglycerides. This is Acidic phospholipase A2 BITP01A from Bothrops insularis (Golden lancehead).